The sequence spans 284 residues: 4-hydroxybenzoate octaprenyltransferase (284 aa).

The next 7 membrane-spanning stretches (helical) occupy residues 33 to 53, 93 to 113, 136 to 156, 159 to 179, 209 to 229, 231 to 248, and 264 to 284; these read VIAAQGMPSWNVLIVFVLGVF, IGLFLVLGISSFLLVLTMNPL, YLPQLFLGLAFSWAIPMAWAA, GELPWIVWFVFVINALWTIAY, LVIGVLQLVTLAMLVLLGQHY, LGQSYYWTILVAASLFVY, and AFLNNNYVGIVIVIGLLIAFW.

It belongs to the UbiA prenyltransferase family. It depends on Mg(2+) as a cofactor.

Its subcellular location is the cell inner membrane. It carries out the reaction all-trans-octaprenyl diphosphate + 4-hydroxybenzoate = 4-hydroxy-3-(all-trans-octaprenyl)benzoate + diphosphate. Its pathway is cofactor biosynthesis; ubiquinone biosynthesis. Functionally, catalyzes the prenylation of para-hydroxybenzoate (PHB) with an all-trans polyprenyl group. Mediates the second step in the final reaction sequence of ubiquinone-8 (UQ-8) biosynthesis, which is the condensation of the polyisoprenoid side chain with PHB, generating the first membrane-bound Q intermediate 3-octaprenyl-4-hydroxybenzoate. In Vibrio campbellii (strain ATCC BAA-1116), this protein is 4-hydroxybenzoate octaprenyltransferase.